Here is a 243-residue protein sequence, read N- to C-terminus: Probable ubiquitin-conjugating enzyme E2 33 (243 aa).

In terms of domain architecture, UBC core spans 5–162 (ACIKRLQKEY…FPEYVEKYSQ (158 aa)). The active-site Glycyl thioester intermediate is the Cys87. Residues 168 to 197 (EEAATQQTTTSENQDFPQKDNAKVESEKSV) form a disordered region. Basic and acidic residues predominate over residues 184 to 197 (PQKDNAKVESEKSV). Residues 220-240 (LPGWIVLLLVSIVGVVMALPL) traverse the membrane as a helical segment.

The protein belongs to the ubiquitin-conjugating enzyme family.

The protein resides in the membrane. The enzyme catalyses S-ubiquitinyl-[E1 ubiquitin-activating enzyme]-L-cysteine + [E2 ubiquitin-conjugating enzyme]-L-cysteine = [E1 ubiquitin-activating enzyme]-L-cysteine + S-ubiquitinyl-[E2 ubiquitin-conjugating enzyme]-L-cysteine.. The protein operates within protein modification; protein ubiquitination. In terms of biological role, accepts the ubiquitin from the E1 complex and catalyzes its covalent attachment to other proteins. The chain is Probable ubiquitin-conjugating enzyme E2 33 (UBC33) from Arabidopsis thaliana (Mouse-ear cress).